A 193-amino-acid polypeptide reads, in one-letter code: ATP-dependent Clp protease proteolytic subunit (193 aa).

The Nucleophile role is filled by S98. H123 is a catalytic residue.

It belongs to the peptidase S14 family. As to quaternary structure, fourteen ClpP subunits assemble into 2 heptameric rings which stack back to back to give a disk-like structure with a central cavity, resembling the structure of eukaryotic proteasomes.

It is found in the cytoplasm. The enzyme catalyses Hydrolysis of proteins to small peptides in the presence of ATP and magnesium. alpha-casein is the usual test substrate. In the absence of ATP, only oligopeptides shorter than five residues are hydrolyzed (such as succinyl-Leu-Tyr-|-NHMec, and Leu-Tyr-Leu-|-Tyr-Trp, in which cleavage of the -Tyr-|-Leu- and -Tyr-|-Trp bonds also occurs).. Functionally, cleaves peptides in various proteins in a process that requires ATP hydrolysis. Has a chymotrypsin-like activity. Plays a major role in the degradation of misfolded proteins. This is ATP-dependent Clp protease proteolytic subunit from Histophilus somni (strain 2336) (Haemophilus somnus).